Here is a 286-residue protein sequence, read N- to C-terminus: L-rhamnose-binding lectin CSL1 (286 aa).

SUEL-type lectin domains follow at residues 96–186 (TTCE…YICL) and 193–280 (TCEG…YTCL).

In terms of biological role, L-rhamnose binding lectin. Has hemagglutinating activity towards rabbit erythrocytes, but not human type B erythrocytes. Hemagglutinating activity is inhibited by smooth-type lipopolysaccharide (LPS) from K.pneumoniae, E.coli K-235, S.flexneri 1A, A.salmonicida and S.minnesota and rough-type LPS from S.flexneri, but not by rough-type LPS from E.coli K12 and E.coli EH100. Agglutinates E.coli K12 and B.subtilis. The chain is L-rhamnose-binding lectin CSL1 from Oncorhynchus keta (Chum salmon).